We begin with the raw amino-acid sequence, 1114 residues long: Lysylphosphatidylglycerol biosynthesis bifunctional protein LysX (1114 aa).

The segment covering 1-11 (MSASTETHHAS) has biased composition (basic and acidic residues). Residues 1-26 (MSASTETHHASEAAVPTAPRPRPGLG) form a disordered region. The tract at residues 1–618 (MSASTETHHA…GLHSDGSAPG (618 aa)) is phosphatidylglycerol lysyltransferase. Helical transmembrane passes span 38-58 (IAGLILGVFSVLVFLWSISPV), 77-97 (APDTSLSWALVVALLAAALAS), 101-121 (IAWWLLTIYLVLFLITNVIVS), 126-146 (NVNAMAAAVVQVVLIGILIAA), 164-184 (GVLIVGLAIGTLLGWGLVELF), and 219-239 (FVNTLLGLFGAIALLAAVITL). The segment at 619-1114 (EGLAPTATGP…LAFPLAKPRQ (496 aa)) is lysine--tRNA ligase. A DNA-binding region (OB) is located at residues 674–751 (VRIAGRLLRI…LSLLANEWRM (78 aa)). The Mg(2+) site is built by aspartate 1025 and glutamate 1032.

The protein in the N-terminal section; belongs to the LPG synthetase family. This sequence in the C-terminal section; belongs to the class-II aminoacyl-tRNA synthetase family. It depends on Mg(2+) as a cofactor.

Its subcellular location is the cell membrane. The catalysed reaction is tRNA(Lys) + L-lysine + ATP = L-lysyl-tRNA(Lys) + AMP + diphosphate. The enzyme catalyses L-lysyl-tRNA(Lys) + a 1,2-diacyl-sn-glycero-3-phospho-(1'-sn-glycerol) = a 1,2-diacyl-sn-glycero-3-phospho-1'-(3'-O-L-lysyl)-sn-glycerol + tRNA(Lys). Functionally, catalyzes the production of L-lysyl-tRNA(Lys)transfer and the transfer of a lysyl group from L-lysyl-tRNA(Lys) to membrane-bound phosphatidylglycerol (PG), which produces lysylphosphatidylglycerol (LPG), one of the components of the bacterial membrane with a positive net charge. LPG synthesis contributes to the resistance to cationic antimicrobial peptides (CAMPs) and likely protects M.tuberculosis against the CAMPs produced by competiting microorganisms (bacteriocins). In fact, the modification of anionic phosphatidylglycerol with positively charged L-lysine results in repulsion of the peptides. The protein is Lysylphosphatidylglycerol biosynthesis bifunctional protein LysX (lysX) of Rhodococcus jostii (strain RHA1).